The primary structure comprises 180 residues: Oligoribonuclease (180 aa).

The 164-residue stretch at Leu-7–Leu-170 folds into the Exonuclease domain. Tyr-128 is a catalytic residue.

This sequence belongs to the oligoribonuclease family.

Its subcellular location is the cytoplasm. Functionally, 3'-to-5' exoribonuclease specific for small oligoribonucleotides. The protein is Oligoribonuclease of Pseudomonas aeruginosa (strain UCBPP-PA14).